Reading from the N-terminus, the 420-residue chain is Glutamate-1-semialdehyde 2,1-aminomutase (420 aa).

The residue at position 259 (Lys259) is an N6-(pyridoxal phosphate)lysine.

This sequence belongs to the class-III pyridoxal-phosphate-dependent aminotransferase family. HemL subfamily. Pyridoxal 5'-phosphate is required as a cofactor.

Its subcellular location is the cytoplasm. It carries out the reaction (S)-4-amino-5-oxopentanoate = 5-aminolevulinate. It participates in porphyrin-containing compound metabolism; protoporphyrin-IX biosynthesis; 5-aminolevulinate from L-glutamyl-tRNA(Glu): step 2/2. This is Glutamate-1-semialdehyde 2,1-aminomutase from Sulfolobus acidocaldarius (strain ATCC 33909 / DSM 639 / JCM 8929 / NBRC 15157 / NCIMB 11770).